The sequence spans 588 residues: Pescadillo homolog (588 aa).

A BRCT domain is found at 344–437 (PVSTLFSDFV…KLVPANLYLP (94 aa)). 2 disordered regions span residues 446–533 (SPWG…EAEE) and 559–588 (KKEE…EGKK). Residues 460 to 493 (DAEEEGEDDEDEDSEEGSGAEVEENVDEDEDDEE) show a composition bias toward acidic residues. Basic and acidic residues-rich tracts occupy residues 510–519 (SDIKDTEVKS) and 576–588 (KTKE…EGKK). Residues 512-588 (IKDTEVKSKN…EKLTKLEGKK (77 aa)) are a coiled coil.

It belongs to the pescadillo family. Component of the NOP7 complex, composed of ERB1, NOP7 and YTM1. The complex is held together by ERB1, which interacts with NOP7 via its N-terminal domain and with YTM1 via a high-affinity interaction between the seven-bladed beta-propeller domains of the 2 proteins. The NOP7 complex associates with the 66S pre-ribosome.

Its subcellular location is the nucleus. It is found in the nucleolus. The protein localises to the nucleoplasm. Component of the NOP7 complex, which is required for maturation of the 25S and 5.8S ribosomal RNAs and formation of the 60S ribosome. This is Pescadillo homolog from Vanderwaltozyma polyspora (strain ATCC 22028 / DSM 70294 / BCRC 21397 / CBS 2163 / NBRC 10782 / NRRL Y-8283 / UCD 57-17) (Kluyveromyces polysporus).